A 574-amino-acid polypeptide reads, in one-letter code: Membralin (574 aa).

Residues M1 to R27 form a disordered region. N-acetylserine is present on S2. A helical membrane pass occupies residues F69 to F89. The N-linked (GlcNAc...) asparagine glycan is linked to N180. 3 helical membrane-spanning segments follow: residues T293 to L313, I337 to I357, and Y417 to F437. Low complexity-rich tracts occupy residues L461–P470 and L491–G501. 2 disordered regions span residues L461–V515 and R546–S574.

This sequence belongs to the membralin family. As to quaternary structure, interacts with ERLIN2. In terms of tissue distribution, detected in brain, spinal cord, lung, liver and kidney.

It localises to the endoplasmic reticulum membrane. Its function is as follows. May have a role in the ERAD pathway required for clearance of misfolded proteins in the endoplasmic reticulum (ER). Promotes survival of motor neurons, probably by protecting against ER stress. This is Membralin (Tmem259) from Mus musculus (Mouse).